Consider the following 559-residue polypeptide: Potassium-transporting ATPase potassium-binding subunit (559 aa).

Helical transmembrane passes span 5–25, 63–83, 131–151, 173–193, 254–274, 282–302, 327–347, 356–376, 379–399, 416–436, 483–503, and 525–545; these read GFLL…PLGT, LLAI…LLML, VGLT…VFAL, ITLW…IQQG, VQML…GEVV, AILW…MWAE, FGIL…CGAV, ALGG…FGGV, GLYG…LMVG, MIAL…ALAM, LLLA…VMAI, and ALFI…TFIP.

The protein belongs to the KdpA family. As to quaternary structure, the system is composed of three essential subunits: KdpA, KdpB and KdpC.

It is found in the cell inner membrane. Its function is as follows. Part of the high-affinity ATP-driven potassium transport (or Kdp) system, which catalyzes the hydrolysis of ATP coupled with the electrogenic transport of potassium into the cytoplasm. This subunit binds the periplasmic potassium ions and delivers the ions to the membrane domain of KdpB through an intramembrane tunnel. The chain is Potassium-transporting ATPase potassium-binding subunit from Klebsiella pneumoniae (strain 342).